The following is a 177-amino-acid chain: MAKHKHEEHPEDVEVKETVETAEQAESASPEKSELELANERADDFENKYLRAHAEMQNIQRRANEERQLLQRYRSQDLAKAILPSLDNLERALAVEGLTDDVKKGLEMVQESLVHALKEEGIEEIPADGEFDHNYHMAIQTVPADDEHPADTIAQVFQKGYKLHDRILRPAMVVVYN.

Composition is skewed to basic and acidic residues over residues 1–19 (MAKH…KETV) and 29–41 (SPEK…ANER). The segment at 1-41 (MAKHKHEEHPEDVEVKETVETAEQAESASPEKSELELANER) is disordered.

It belongs to the GrpE family. Homodimer.

Its subcellular location is the cytoplasm. Functionally, participates actively in the response to hyperosmotic and heat shock by preventing the aggregation of stress-denatured proteins, in association with DnaK and GrpE. It is the nucleotide exchange factor for DnaK and may function as a thermosensor. Unfolded proteins bind initially to DnaJ; upon interaction with the DnaJ-bound protein, DnaK hydrolyzes its bound ATP, resulting in the formation of a stable complex. GrpE releases ADP from DnaK; ATP binding to DnaK triggers the release of the substrate protein, thus completing the reaction cycle. Several rounds of ATP-dependent interactions between DnaJ, DnaK and GrpE are required for fully efficient folding. This Streptococcus gordonii (strain Challis / ATCC 35105 / BCRC 15272 / CH1 / DL1 / V288) protein is Protein GrpE.